A 118-amino-acid chain; its full sequence is Ribonuclease P protein component (118 aa).

This sequence belongs to the RnpA family. In terms of assembly, consists of a catalytic RNA component (M1 or rnpB) and a protein subunit.

It carries out the reaction Endonucleolytic cleavage of RNA, removing 5'-extranucleotides from tRNA precursor.. In terms of biological role, RNaseP catalyzes the removal of the 5'-leader sequence from pre-tRNA to produce the mature 5'-terminus. It can also cleave other RNA substrates such as 4.5S RNA. The protein component plays an auxiliary but essential role in vivo by binding to the 5'-leader sequence and broadening the substrate specificity of the ribozyme. In Rickettsia canadensis (strain McKiel), this protein is Ribonuclease P protein component.